A 208-amino-acid polypeptide reads, in one-letter code: MKVVEVKHPLIKHKIGLMREGEISTKRFRELATEVGSLLTYEATSDFETEKVTINGWNGPVEVDQIKGKKVTVVPILRAGLGMMDGVLEHIPSARISVVGIYRDEETLEPVPYFNKLASNIDERIALVVDPMLATGGSMIATLDLLKEKGCKHFKVLVLVAAPEGIEALEKAHPDVELYTAAIDEKLNDKGYIVPGLGDAGDKIFGTK.

Residues Arg78, Arg103, and 130 to 138 (DPMLATGGS) each bind 5-phospho-alpha-D-ribose 1-diphosphate. Uracil-binding positions include Ile193 and 198–200 (GDA). Asp199 provides a ligand contact to 5-phospho-alpha-D-ribose 1-diphosphate.

It belongs to the UPRTase family. It depends on Mg(2+) as a cofactor.

The enzyme catalyses UMP + diphosphate = 5-phospho-alpha-D-ribose 1-diphosphate + uracil. It functions in the pathway pyrimidine metabolism; UMP biosynthesis via salvage pathway; UMP from uracil: step 1/1. With respect to regulation, allosterically activated by GTP. Catalyzes the conversion of uracil and 5-phospho-alpha-D-ribose 1-diphosphate (PRPP) to UMP and diphosphate. The polypeptide is Uracil phosphoribosyltransferase (Aliivibrio fischeri (strain MJ11) (Vibrio fischeri)).